Reading from the N-terminus, the 122-residue chain is MIQVQTRLQVADNTGAKELMCIKVLGGSWRRYANIGDVIVCSVKEASPGGVVKKGDVVRAVVVRTKKGLRREDGSYIRFDENAAVILKDDKEPRGTRIFGPVARELRDKEFMKIISLAPEVL.

It belongs to the universal ribosomal protein uL14 family. Part of the 50S ribosomal subunit. Forms a cluster with proteins L3 and L19. In the 70S ribosome, L14 and L19 interact and together make contacts with the 16S rRNA in bridges B5 and B8.

Functionally, binds to 23S rRNA. Forms part of two intersubunit bridges in the 70S ribosome. This Symbiobacterium thermophilum (strain DSM 24528 / JCM 14929 / IAM 14863 / T) protein is Large ribosomal subunit protein uL14.